The primary structure comprises 507 residues: Histidine ammonia-lyase (507 aa).

The 5-imidazolinone (Ala-Gly) cross-link spans 141–143; that stretch reads ASG. The residue at position 142 (Ser-142) is a 2,3-didehydroalanine (Ser).

Belongs to the PAL/histidase family. In terms of processing, contains an active site 4-methylidene-imidazol-5-one (MIO), which is formed autocatalytically by cyclization and dehydration of residues Ala-Ser-Gly.

It localises to the cytoplasm. The catalysed reaction is L-histidine = trans-urocanate + NH4(+). It participates in amino-acid degradation; L-histidine degradation into L-glutamate; N-formimidoyl-L-glutamate from L-histidine: step 1/3. This Burkholderia ambifaria (strain MC40-6) protein is Histidine ammonia-lyase.